The chain runs to 352 residues: Putative conjugal transfer protein MT3759 (352 aa).

160-167 (GGTGAGKT) provides a ligand contact to ATP.

Belongs to the GSP E family.

It is found in the cytoplasm. In Mycobacterium tuberculosis (strain CDC 1551 / Oshkosh), this protein is Putative conjugal transfer protein MT3759.